The primary structure comprises 382 residues: ATP phosphoribosyltransferase regulatory subunit (382 aa).

Belongs to the class-II aminoacyl-tRNA synthetase family. HisZ subfamily. As to quaternary structure, heteromultimer composed of HisG and HisZ subunits.

It is found in the cytoplasm. The protein operates within amino-acid biosynthesis; L-histidine biosynthesis; L-histidine from 5-phospho-alpha-D-ribose 1-diphosphate: step 1/9. Functionally, required for the first step of histidine biosynthesis. May allow the feedback regulation of ATP phosphoribosyltransferase activity by histidine. This chain is ATP phosphoribosyltransferase regulatory subunit, found in Burkholderia ambifaria (strain MC40-6).